Here is a 224-residue protein sequence, read N- to C-terminus: MWGSRIAVALRILVVLAILPVFLLLVYSLPFVRPVSTLMVKDYALLQGVNRQWVDIENIAPVLVNSVMMAEDGQFCSHGGVDWHQLGLVLDDAGDGGPSRGASTITMQMVKNLFLWNGRSYLRKGLEFPLALIADAVLSKKRIMEIYLNIAEWGPGIYGIEAAARHYFKRSAAKLTARQAALLAVTLPNPALRNPAKPTRNMQRIARIVAGRAMRSGPYVTCVK.

The chain crosses the membrane as a helical span at residues 12–32 (ILVVLAILPVFLLLVYSLPFV).

The protein belongs to the glycosyltransferase 51 family.

It is found in the cell inner membrane. The enzyme catalyses [GlcNAc-(1-&gt;4)-Mur2Ac(oyl-L-Ala-gamma-D-Glu-L-Lys-D-Ala-D-Ala)](n)-di-trans,octa-cis-undecaprenyl diphosphate + beta-D-GlcNAc-(1-&gt;4)-Mur2Ac(oyl-L-Ala-gamma-D-Glu-L-Lys-D-Ala-D-Ala)-di-trans,octa-cis-undecaprenyl diphosphate = [GlcNAc-(1-&gt;4)-Mur2Ac(oyl-L-Ala-gamma-D-Glu-L-Lys-D-Ala-D-Ala)](n+1)-di-trans,octa-cis-undecaprenyl diphosphate + di-trans,octa-cis-undecaprenyl diphosphate + H(+). It participates in cell wall biogenesis; peptidoglycan biosynthesis. Functionally, peptidoglycan polymerase that catalyzes glycan chain elongation from lipid-linked precursors. The protein is Biosynthetic peptidoglycan transglycosylase of Brucella suis biovar 1 (strain 1330).